The following is a 515-amino-acid chain: 2-isopropylmalate synthase (515 aa).

Residues 5–267 (VIIFDTTLRD…HTNLKHDEIH (263 aa)) enclose the Pyruvate carboxyltransferase domain. Mn(2+) is bound by residues Asp-14, His-202, His-204, and Asn-238. A regulatory domain region spans residues 392-515 (KLNYLSVQSG…EIKQKKVETV (124 aa)).

Belongs to the alpha-IPM synthase/homocitrate synthase family. LeuA type 1 subfamily. As to quaternary structure, homodimer. Requires Mn(2+) as cofactor.

It localises to the cytoplasm. The enzyme catalyses 3-methyl-2-oxobutanoate + acetyl-CoA + H2O = (2S)-2-isopropylmalate + CoA + H(+). It functions in the pathway amino-acid biosynthesis; L-leucine biosynthesis; L-leucine from 3-methyl-2-oxobutanoate: step 1/4. Catalyzes the condensation of the acetyl group of acetyl-CoA with 3-methyl-2-oxobutanoate (2-ketoisovalerate) to form 3-carboxy-3-hydroxy-4-methylpentanoate (2-isopropylmalate). The sequence is that of 2-isopropylmalate synthase from Aliivibrio fischeri (strain MJ11) (Vibrio fischeri).